Here is a 366-residue protein sequence, read N- to C-terminus: Glutamate 5-kinase (366 aa).

K17 is an ATP binding site. 3 residues coordinate substrate: S57, D144, and N156. ATP contacts are provided by residues 176 to 177 and 216 to 222; these read SD and TGGMASK. Positions 278–352 constitute a PUA domain; that stretch reads RGALVLDDGA…GRSTTELPDT (75 aa).

The protein belongs to the glutamate 5-kinase family.

The protein localises to the cytoplasm. It carries out the reaction L-glutamate + ATP = L-glutamyl 5-phosphate + ADP. It functions in the pathway amino-acid biosynthesis; L-proline biosynthesis; L-glutamate 5-semialdehyde from L-glutamate: step 1/2. Catalyzes the transfer of a phosphate group to glutamate to form L-glutamate 5-phosphate. In Nocardia farcinica (strain IFM 10152), this protein is Glutamate 5-kinase.